The primary structure comprises 1218 residues: Protein jagged-1 (1218 aa).

Residues 1–33 (MRSPRTRGRPGRPLSLLLALLCALRAKVCGASG) form the signal peptide. Over 34–1067 (QFELEILSMQ…QRRPLKNRTD (1034 aa)) the chain is Extracellular. The N-linked (GlcNAc...) asparagine glycan is linked to Asn-143. The 45-residue stretch at 185 to 229 (VTCDDHYYGFGCNKFCRPRDDFFGHYACDQNGNKTCMEGWMGPDC) folds into the DSL domain. 2 disulfides stabilise this stretch: Cys-187–Cys-196 and Cys-200–Cys-212. Residues 199-207 (FCRPRDDFF) are important for interaction with NOTCH1. A glycan (N-linked (GlcNAc...) asparagine) is linked at Asn-217. Disulfide bonds link Cys-220–Cys-229, Cys-234–Cys-245, Cys-238–Cys-251, Cys-253–Cys-262, Cys-265–Cys-276, Cys-271–Cys-282, Cys-284–Cys-293, Cys-300–Cys-312, Cys-306–Cys-322, Cys-324–Cys-333, Cys-340–Cys-351, Cys-345–Cys-360, Cys-362–Cys-371, Cys-378–Cys-389, Cys-383–Cys-398, Cys-400–Cys-409, Cys-416–Cys-427, Cys-421–Cys-436, Cys-438–Cys-447, Cys-454–Cys-464, Cys-458–Cys-473, Cys-475–Cys-484, Cys-491–Cys-502, Cys-496–Cys-511, Cys-513–Cys-522, Cys-529–Cys-540, Cys-534–Cys-549, Cys-551–Cys-560, Cys-578–Cys-605, Cys-599–Cys-615, Cys-617–Cys-626, Cys-633–Cys-644, Cys-638–Cys-653, Cys-655–Cys-664, Cys-671–Cys-682, Cys-676–Cys-691, Cys-693–Cys-702, Cys-709–Cys-720, Cys-714–Cys-729, and Cys-731–Cys-740. The region spanning 230–263 (NKAICRQGCSPKHGSCKLPGDCRCQYGWQGLYCD) is the EGF-like 1 domain. The region spanning 264–294 (KCIPHPGCVHGTCNEPWQCLCETNWGGQLCD) is the EGF-like 2; atypical domain. 2 consecutive EGF-like domains span residues 296-334 (DLNY…PNCE) and 336-372 (AEHA…PTCS). Residues 374–410 (NIDDCSPNNCSHGGTCQDLVNGFKCVCPPQWTGKTCQ) form the EGF-like 5; calcium-binding domain. Residue Asn-382 is glycosylated (N-linked (GlcNAc...) asparagine). The 37-residue stretch at 412–448 (DANECEAKPCVNARSCKNLIASYYCDCLPGWMGQNCD) folds into the EGF-like 6; calcium-binding domain. In terms of domain architecture, EGF-like 7; calcium-binding spans 450–485 (NINDCLGQCQNDASCRDLVNGYRCICPPGYAGDHCE). Positions 487–523 (DIDECASNPCLNGGHCQNEINRFQCLCPTGFSGNLCQ) constitute an EGF-like 8; calcium-binding domain. EGF-like domains lie at 525 to 561 (DIDY…KNCS) and 586 to 627 (DTPE…TYCH). A glycan (N-linked (GlcNAc...) asparagine) is linked at Asn-559. The EGF-like 11; calcium-binding domain maps to 629–665 (NINDCESNPCKNGGTCIDGVNSYKCICSDGWEGAHCE). The EGF-like 12; calcium-binding domain occupies 667-703 (NINDCSQNPCHYGGTCRDLVNDFYCDCKNGWKGKTCH). 2 consecutive EGF-like domains span residues 705–741 (RDSQ…TTCN) and 744–780 (RNSS…PICT). N-linked (GlcNAc...) asparagine glycosylation is present at Asn-745. Cystine bridges form between Cys-748–Cys-759, Cys-753–Cys-768, Cys-770–Cys-779, Cys-786–Cys-797, Cys-791–Cys-806, Cys-808–Cys-817, Cys-824–Cys-835, Cys-829–Cys-844, and Cys-846–Cys-855. The EGF-like 15; calcium-binding domain maps to 782–818 (NTNDCSPHPCYNSGTCVDGDNWYRCECAPGFAGPDCR). Positions 820 to 856 (NINECQSSPCAFGATCVDEINGYQCICPPGHSGAKCH) constitute an EGF-like 16; calcium-binding domain. 4 N-linked (GlcNAc...) asparagine glycosylation sites follow: Asn-960, Asn-991, Asn-1045, and Asn-1064. The chain crosses the membrane as a helical span at residues 1068–1093 (FLVPLLSSVLTVAWVCCLVTAFYWCV). At 1094–1218 (RKRRKPSSHT…QSLNRMEYIV (125 aa)) the chain is on the cytoplasmic side. Positions 1181–1218 (REEKAPSGTPTKHPNWTNKQDNRDLESAQSLNRMEYIV) are disordered. Residues 1188-1199 (GTPTKHPNWTNK) are compositionally biased toward polar residues.

In terms of assembly, interacts with NOTCH1, NOTCH2 and NOTCH3. In terms of tissue distribution, widely expressed in many tissues, with highest expression in brain, heart, muscle and thymus.

It is found in the membrane. The protein localises to the cell membrane. Ligand for multiple Notch receptors and involved in the mediation of Notch signaling. May be involved in cell-fate decisions during hematopoiesis. Seems to be involved in early and late stages of mammalian cardiovascular development. Inhibits myoblast differentiation. May regulate fibroblast growth factor-induced angiogenesis. The polypeptide is Protein jagged-1 (Jag1) (Mus musculus (Mouse)).